Reading from the N-terminus, the 657-residue chain is 1-deoxy-D-xylulose-5-phosphate synthase (657 aa).

Histidine 73 lines the thiamine diphosphate pocket. The segment at 91-110 (RQEGGMSGYPDRGESEHDIV) is disordered. The span at 101–110 (DRGESEHDIV) shows a compositional bias: basic and acidic residues. A thiamine diphosphate-binding site is contributed by 113–115 (SHA). Position 145 (aspartate 145) interacts with Mg(2+). Thiamine diphosphate contacts are provided by residues 146–147 (GA), asparagine 175, tyrosine 293, and glutamate 375. Asparagine 175 is a binding site for Mg(2+).

The protein belongs to the transketolase family. DXPS subfamily. Homodimer. Requires Mg(2+) as cofactor. It depends on thiamine diphosphate as a cofactor.

The catalysed reaction is D-glyceraldehyde 3-phosphate + pyruvate + H(+) = 1-deoxy-D-xylulose 5-phosphate + CO2. It participates in metabolic intermediate biosynthesis; 1-deoxy-D-xylulose 5-phosphate biosynthesis; 1-deoxy-D-xylulose 5-phosphate from D-glyceraldehyde 3-phosphate and pyruvate: step 1/1. Its function is as follows. Catalyzes the acyloin condensation reaction between C atoms 2 and 3 of pyruvate and glyceraldehyde 3-phosphate to yield 1-deoxy-D-xylulose-5-phosphate (DXP). The polypeptide is 1-deoxy-D-xylulose-5-phosphate synthase (Arthrobacter sp. (strain FB24)).